The following is a 273-amino-acid chain: Large ribosomal subunit protein uL2cz/uL2cy (273 aa).

Disordered regions lie at residues Met1–Lys23 and Asn224–Lys273. The segment covering Lys262–Lys273 has biased composition (basic and acidic residues).

Belongs to the universal ribosomal protein uL2 family. In terms of assembly, part of the 50S ribosomal subunit.

It is found in the plastid. It localises to the chloroplast. The protein is Large ribosomal subunit protein uL2cz/uL2cy (rpl2-A) of Acorus calamus var. americanus (American sweet flag).